The sequence spans 722 residues: Serine/threonine-protein kinase dkf-1 (722 aa).

2 Phorbol-ester/DAG-type zinc fingers span residues 98 to 148 (PHVV…RNNC) and 186 to 236 (PHTL…ASNC). The 129-residue stretch at 279 to 407 (KKLEGWMMHF…QFIKESLQPP (129 aa)) folds into the PH domain. The 260-residue stretch at 426 to 685 (VLSDKTLGSG…IEQCLDHGWL (260 aa)) folds into the Protein kinase domain. ATP is bound by residues 432–440 (LGSGQFGTV) and Lys455. The active-site Proton acceptor is the Asp551. The residue at position 588 (Thr588) is a Phosphothreonine.

The protein belongs to the protein kinase superfamily. CAMK Ser/Thr protein kinase family. PKD subfamily. The cofactor is Mg(2+). Post-translationally, prolonged phosphorylation at Thr-588 results in ubiquitination and degradation. Highly expressed in embryos and at lower levels through the four larval stages in adults. Present in a region bounded by the anterior and posterior bulbs of the pharynx and an area of the tail containing the lumbar, dorsorectal and pre-anal ganglia. Expressed in neurons.

The protein resides in the cytoplasm. The protein localises to the membrane. It catalyses the reaction L-seryl-[protein] + ATP = O-phospho-L-seryl-[protein] + ADP + H(+). It carries out the reaction L-threonyl-[protein] + ATP = O-phospho-L-threonyl-[protein] + ADP + H(+). Its activity is regulated as follows. Activated by DAG and phorbol esters. Phorbol-ester/DAG-type domain 1 binds phorbol ester with high affinity and mediates accumulation at the cell periphery. Phorbol-ester/DAG-type domain 2 binds phorbol ester with low affinity but may mediate initial contact, resulting in a conformational change allowing previously occluded domain 1 to anchor the kinase. Phosphorylation on Thr-588 is then also required for activation and may also result in a further conformational change. In terms of biological role, converts transient diacylglycerol (DAG) signals into prolonged physiological effects, independently of PKC. Role in the regulation of growth and neuromuscular control of movement. Involved in immune response to S.aureus bacterium by activating transcription factor hlh-30 downstream of phospholipase plc-1. The polypeptide is Serine/threonine-protein kinase dkf-1 (dkf-1) (Caenorhabditis elegans).